Consider the following 351-residue polypeptide: Fe(3+) ions import ATP-binding protein FbpC (351 aa).

One can recognise an ABC transporter domain in the interval 7-241 (LTVKNLNKFF…PNHLETAKFM (235 aa)). 39–46 (GASGCGKT) provides a ligand contact to ATP.

The protein belongs to the ABC transporter superfamily. Fe(3+) ion importer (TC 3.A.1.10) family. In terms of assembly, the complex is composed of two ATP-binding proteins (FbpC), two transmembrane proteins (FbpB) and a solute-binding protein (FbpA).

The protein resides in the cell inner membrane. It carries out the reaction Fe(3+)(out) + ATP + H2O = Fe(3+)(in) + ADP + phosphate + H(+). Functionally, part of the ABC transporter complex FbpABC involved in Fe(3+) ions import. Responsible for energy coupling to the transport system. This chain is Fe(3+) ions import ATP-binding protein FbpC, found in Haemophilus influenzae (strain 86-028NP).